A 58-amino-acid chain; its full sequence is uncharacterized protein (58 aa).

A compositionally biased stretch (low complexity) spans 23–51 (TTTSTSTTTTSTTTSTTTSTTTTTTTTTT). A disordered region spans residues 23–58 (TTTSTSTTTTSTTTSTTTSTTTTTTTTTTKDFNTET).

This is an uncharacterized protein from Dictyostelium discoideum (Social amoeba).